The following is a 342-amino-acid chain: Terpene cyclase resF (342 aa).

5 consecutive transmembrane segments (helical) span residues 5-25, 81-101, 115-135, 151-171, and 182-202; these read VSVVFVSLIIAAAVGVWGVFA, FMAQLLANVFAIPIVLLTEDF, WGVFSQLATSAVMCPLYGVCF, STWIVLISVLIGYGAPAMLIF, and IWGVLAFTVYPLYVCLTASLL. Asn224 carries an N-linked (GlcNAc...) asparagine glycan. A run of 3 helical transmembrane segments spans residues 229-249, 269-289, and 305-325; these read YVVAGIVGVAGHLSYIGFHLG, FLQIDYVITFAAMLTLAWHEL, and YLLLGWLFIGPGATLAAAWAL.

It belongs to the membrane-bound ascI terpene cyclase family.

It localises to the membrane. It functions in the pathway antifungal biosynthesis. In terms of biological role, cyclase; part of the gene cluster that mediates the biosynthesis of the tetrahydropyranyl antifungal agent restricticin that acts as an inhibitor of CYP51 and blocks the ergosterol biosynthesis. The highly reducing polyketide synthase resH, the short chain dehydrogenase resG, the cyclase resF, the FAD-dependent monooxygenase resA and the enoylreductase resD are required to generate the first stable intermediate desmethylrestrictinol. ResH with resD biosynthesize the first polyketide chain intermediate that is reduced by resG, followed by epoxidation by resA before 6-endo cyclization via epoxide opening by resF leads to desmethylrestrictinol. The methyltransferase resE then catalyzes the C4 O-methylation of desmethylrestrictinol to produce restrictinol, and the nonribosomal peptide synthetase resC catalyzes the C3 esterification of restrictinol with glycine that leads to restricticin. In Aspergillus sclerotiorum, this protein is Terpene cyclase resF.